The primary structure comprises 248 residues: Probable transcriptional regulatory protein Dde_2325 (248 aa).

The span at 1 to 15 (MAGHSKWKNIQHRKG) shows a compositional bias: basic residues. Residues 1-22 (MAGHSKWKNIQHRKGRQDAKKS) are disordered.

It belongs to the TACO1 family.

The protein resides in the cytoplasm. The chain is Probable transcriptional regulatory protein Dde_2325 from Oleidesulfovibrio alaskensis (strain ATCC BAA-1058 / DSM 17464 / G20) (Desulfovibrio alaskensis).